We begin with the raw amino-acid sequence, 184 residues long: NADH-quinone oxidoreductase subunit B (184 aa).

The [4Fe-4S] cluster site is built by cysteine 63, cysteine 64, cysteine 128, and cysteine 158.

Belongs to the complex I 20 kDa subunit family. As to quaternary structure, NDH-1 is composed of 14 different subunits. Subunits NuoB, C, D, E, F, and G constitute the peripheral sector of the complex. Requires [4Fe-4S] cluster as cofactor.

It is found in the cell inner membrane. The catalysed reaction is a quinone + NADH + 5 H(+)(in) = a quinol + NAD(+) + 4 H(+)(out). Its function is as follows. NDH-1 shuttles electrons from NADH, via FMN and iron-sulfur (Fe-S) centers, to quinones in the respiratory chain. Couples the redox reaction to proton translocation (for every two electrons transferred, four hydrogen ions are translocated across the cytoplasmic membrane), and thus conserves the redox energy in a proton gradient. This Stenotrophomonas maltophilia (strain R551-3) protein is NADH-quinone oxidoreductase subunit B.